Reading from the N-terminus, the 501-residue chain is MITIFWIWGICLSVCCCLWLILGLRRRRMGEPPLEKGWIPYLGCALQFGANPLDFLRANQRKYGHVFTCKLMGKYVHFITNSLSYHKVLCHGKYFDWKKFHFTTSAKAFGHRSIDPRDGNTTENINNTFNKTLQGDALISLTDAMMENLQLTLRRPEPKSRAWVTEGMYSFCYRVMFEAGYLTLFGRELTRQDAQRAFILNSLEDFKQFDKVFPALVAGLPIHIFMTAHNAREKLAEGLKHDNLRTRDHISELIRLRMFLNDTLSTFDAMEKAKTHLAILWASQANTIPATFWSLFHMMRSSEALKAATEEVNKALEDADQQINFEGKPIHLNQTQLNDMPVLDSIIKESLRLSSASLNIRTAKEDFTLHLEDGSYNIRKDDIIALYPQLMHLDPEIYPDPMTFKYDRYLDENRKTKTTFYSKGLKLKYYYMPFGSGATICPGRLFAIQEIKQFLILMLSYFELEFVDSHVKCPPLDQSRAGLGILPPLNDIEFKYKFKHL.

The chain crosses the membrane as a helical span at residues 4–24; that stretch reads IFWIWGICLSVCCCLWLILGL. Cysteine 441 lines the heme pocket.

This sequence belongs to the cytochrome P450 family. The cofactor is heme. Detected in liver.

The protein resides in the endoplasmic reticulum membrane. The protein localises to the microsome membrane. The catalysed reaction is cholesterol + reduced [NADPH--hemoprotein reductase] + O2 = 7alpha-hydroxycholesterol + oxidized [NADPH--hemoprotein reductase] + H2O + H(+). It carries out the reaction 4beta-hydroxycholesterol + reduced [NADPH--hemoprotein reductase] + O2 = 4beta,7alpha-dihydroxycholesterol + oxidized [NADPH--hemoprotein reductase] + H2O + H(+). The enzyme catalyses lathosterol + reduced [NADPH--hemoprotein reductase] + O2 = 7alpha,8alpha-epoxy-5alpha-cholestan-3beta-ol + oxidized [NADPH--hemoprotein reductase] + H2O + H(+). It catalyses the reaction lathosterol + reduced [NADPH--hemoprotein reductase] + O2 = 5alpha-cholestan-7-oxo-3beta-ol + oxidized [NADPH--hemoprotein reductase] + H2O + H(+). The catalysed reaction is 7-dehydrocholesterol + reduced [NADPH--hemoprotein reductase] + O2 = 7-oxocholesterol + oxidized [NADPH--hemoprotein reductase] + H2O + H(+). It carries out the reaction (24S)-hydroxycholesterol + reduced [NADPH--hemoprotein reductase] + O2 = (24S)-7alpha-dihydroxycholesterol + oxidized [NADPH--hemoprotein reductase] + H2O + H(+). The enzyme catalyses (24R)-hydroxycholesterol + reduced [NADPH--hemoprotein reductase] + O2 = (24R)-7alpha-dihydroxycholesterol + oxidized [NADPH--hemoprotein reductase] + H2O + H(+). It functions in the pathway lipid metabolism; bile acid biosynthesis. The protein operates within steroid metabolism; cholesterol degradation. Functionally, a cytochrome P450 monooxygenase involved in the metabolism of endogenous cholesterol and its oxygenated derivatives (oxysterols). Mechanistically, uses molecular oxygen inserting one oxygen atom into a substrate, and reducing the second into a water molecule, with two electrons provided by NADPH via cytochrome P450 reductase (CPR; NADPH-ferrihemoprotein reductase). Functions as a critical regulatory enzyme of bile acid biosynthesis and cholesterol homeostasis. Catalyzes the hydroxylation of carbon hydrogen bond at 7-alpha position of cholesterol, a rate-limiting step in cholesterol catabolism and bile acid biosynthesis. 7-alpha hydroxylates several oxysterols, including 4beta-hydroxycholesterol and 24-hydroxycholesterol. Catalyzes the oxidation of the 7,8 double bond of 7-dehydrocholesterol and lathosterol with direct and predominant formation of the 7-keto derivatives. This chain is Cytochrome P450 7A1 (CYP7A1), found in Oryctolagus cuniculus (Rabbit).